The primary structure comprises 204 residues: Holliday junction branch migration complex subunit RuvA (204 aa).

Positions M1–N64 are domain I. The interval S65–D143 is domain II. The interval A144–E155 is flexible linker. The tract at residues T156 to I204 is domain III.

The protein belongs to the RuvA family. Homotetramer. Forms an RuvA(8)-RuvB(12)-Holliday junction (HJ) complex. HJ DNA is sandwiched between 2 RuvA tetramers; dsDNA enters through RuvA and exits via RuvB. An RuvB hexamer assembles on each DNA strand where it exits the tetramer. Each RuvB hexamer is contacted by two RuvA subunits (via domain III) on 2 adjacent RuvB subunits; this complex drives branch migration. In the full resolvosome a probable DNA-RuvA(4)-RuvB(12)-RuvC(2) complex forms which resolves the HJ.

Its subcellular location is the cytoplasm. Its function is as follows. The RuvA-RuvB-RuvC complex processes Holliday junction (HJ) DNA during genetic recombination and DNA repair, while the RuvA-RuvB complex plays an important role in the rescue of blocked DNA replication forks via replication fork reversal (RFR). RuvA specifically binds to HJ cruciform DNA, conferring on it an open structure. The RuvB hexamer acts as an ATP-dependent pump, pulling dsDNA into and through the RuvAB complex. HJ branch migration allows RuvC to scan DNA until it finds its consensus sequence, where it cleaves and resolves the cruciform DNA. The protein is Holliday junction branch migration complex subunit RuvA of Erwinia tasmaniensis (strain DSM 17950 / CFBP 7177 / CIP 109463 / NCPPB 4357 / Et1/99).